Reading from the N-terminus, the 727-residue chain is Probable metal-nicotianamine transporter YSL14 (727 aa).

Composition is skewed to low complexity over residues 1-10 and 18-27; these read MAQHTAAAAG and AEAAAAAAAG. Residues 1-61 form a disordered region; the sequence is MAQHTAAAAG…RNGGADDPDA (61 aa). Residues 45-54 show a composition bias toward gly residues; it reads AGGGGGGRNG. A run of 14 helical transmembrane segments spans residues 84–104, 107–127, 152–172, 194–214, 256–276, 314–334, 359–379, 432–452, 460–480, 492–512, 546–566, 604–624, 646–666, and 681–701; these read AFVV…KLNL, GIIP…VRLW, CVVS…LFGM, LGWM…ALVP, LGKY…YTAG, IVNV…WPLI, VFIS…KVLI, VAYG…PEIF, ILVA…GSGL, LAIF…LVGL, FISQ…VFWL, PENC…INLI, FYIG…LFVW, and VASG…ILAL.

It belongs to the YSL (TC 2.A.67.2) family. In terms of tissue distribution, expressed in leaves and at low levels in roots.

The protein resides in the membrane. Functionally, may be involved in the transport of nicotianamine-chelated metals. In Oryza sativa subsp. japonica (Rice), this protein is Probable metal-nicotianamine transporter YSL14 (YSL14).